The following is a 3483-amino-acid chain: Nonribosomal peptide synthetase Ao415 (3483 aa).

Residues T281 to V669 are adenylation 1. In terms of domain architecture, Carrier 1 spans E775–K851. O-(pantetheine 4'-phosphoryl)serine is present on S812. The interval A886–Q1297 is condensation 1. Residues T1363–V1758 form an adenylation 2 region. The 77-residue stretch at E1865–N1941 folds into the Carrier 2 domain. Residue S1901 is modified to O-(pantetheine 4'-phosphoryl)serine. The tract at residues I1981 to A2379 is condensation 2. In terms of domain architecture, Carrier 3 spans T2412–K2485. The residue at position 2446 (S2446) is an O-(pantetheine 4'-phosphoryl)serine. The segment at E2520–L2917 is condensation 3. A Carrier 4 domain is found at D2954–Q3030. S2991 bears the O-(pantetheine 4'-phosphoryl)serine mark. The condensation 4 stretch occupies residues S3084–T3368.

It belongs to the NRP synthetase family.

It participates in siderophore biosynthesis. Functionally, nonribosomal peptide synthetase; part of the gene cluster that mediates the biosynthesis of desferriferrichrome that chelates Fe(3+) to form ferrichrome. Fe(3+) is a key factor for induction of trap formation and the fungus uses the iron chelating desferriferrichrome to sequester Fe(3+) to inhibit trap formation and increase nematicidal activity. The biosynthesis of desferriferrichrome requires the action of the L-ornithine N(5)-oxygenase (LOO) Ao414 that hydroxylates L-ornithine at N(5), resulting in the formation of N(5)-hydroxyl-L-ornithine, which is subsequently N-acetylated to yield N(5)-acetyl-N(5)-hydroxy-L-ornithine (L-AHO). L-AHO harbors one hydroxamate moiety, which is the key core responsible for chelating iron. Then, L-AHO is further condensated with glycines to form desferriferrichrome through the NRPS protein Ao415. This is Nonribosomal peptide synthetase Ao415 from Arthrobotrys oligospora (strain ATCC 24927 / CBS 115.81 / DSM 1491) (Nematode-trapping fungus).